A 147-amino-acid polypeptide reads, in one-letter code: Protein Turandot Z (147 aa).

A signal peptide spans Met-1–Ala-23.

Belongs to the Turandot family.

Its subcellular location is the secreted. A humoral factor that may play a role in stress tolerance. This Drosophila melanogaster (Fruit fly) protein is Protein Turandot Z.